We begin with the raw amino-acid sequence, 441 residues long: 3-phosphoshikimate 1-carboxyvinyltransferase (441 aa).

Residues 1–24 (MSGTGQSDDPRELKAGGSLQGRVK) are disordered. Positions 29, 30, and 34 each coordinate 3-phosphoshikimate. Lys-29 lines the phosphoenolpyruvate pocket. Phosphoenolpyruvate contacts are provided by Gly-103 and Arg-132. 4 residues coordinate 3-phosphoshikimate: Ser-177, Gln-179, Asp-328, and Lys-355. Gln-179 contacts phosphoenolpyruvate. Catalysis depends on Asp-328, which acts as the Proton acceptor. Arg-359 and Arg-401 together coordinate phosphoenolpyruvate.

This sequence belongs to the EPSP synthase family. As to quaternary structure, monomer.

It localises to the cytoplasm. The enzyme catalyses 3-phosphoshikimate + phosphoenolpyruvate = 5-O-(1-carboxyvinyl)-3-phosphoshikimate + phosphate. Its pathway is metabolic intermediate biosynthesis; chorismate biosynthesis; chorismate from D-erythrose 4-phosphate and phosphoenolpyruvate: step 6/7. Catalyzes the transfer of the enolpyruvyl moiety of phosphoenolpyruvate (PEP) to the 5-hydroxyl of shikimate-3-phosphate (S3P) to produce enolpyruvyl shikimate-3-phosphate and inorganic phosphate. The chain is 3-phosphoshikimate 1-carboxyvinyltransferase from Synechococcus sp. (strain CC9605).